The following is a 294-amino-acid chain: Non-selective voltage-gated ion channel VDAC2 (294 aa).

The residue at position 2 (alanine 2) is an N-acetylalanine. 2 residues coordinate ATP: lysine 23 and lysine 31. An N6-acetyllysine; alternate modification is found at lysine 31. The residue at position 31 (lysine 31) is an N6-succinyllysine; alternate. Residue lysine 31 forms a Glycyl lysine isopeptide (Lys-Gly) (interchain with G-Cter in ubiquitin); alternate linkage. 2 beta stranded membrane-spanning segments follow: residues 37–46 (LVKLDVKTKS) and 50–58 (VEFSTSGSS). Lysine 64 participates in a covalent cross-link: Glycyl lysine isopeptide (Lys-Gly) (interchain with G-Cter in ubiquitin). The chain crosses the membrane as a beta stranded span at residues 65–75 (VTGTLETKYKW). At tyrosine 78 the chain carries Phosphotyrosine. The next 3 beta stranded transmembrane spans lie at 80-87 (LTFTEKWN), 91-100 (TLGTEIAIED), and 106-115 (LKLTFDTTFS). Phosphothreonine is present on threonine 118. Residue lysine 120 is modified to N6-acetyllysine; alternate. Residue lysine 120 forms a Glycyl lysine isopeptide (Lys-Gly) (interchain with G-Cter in ubiquitin); alternate linkage. Lysine 121 participates in a covalent cross-link: Glycyl lysine isopeptide (Lys-Gly) (interchain with G-Cter in ubiquitin). 4 beta stranded membrane passes run 122–131 (SGKIKSSYKR), 134–141 (INLGCDVD), 148–156 (AIHGSAVFG), and 161–169 (LAGYQMTFD). Residue lysine 172 forms a Glycyl lysine isopeptide (Lys-Gly) (interchain with G-Cter in ubiquitin) linkage. Beta stranded transmembrane passes span 174–186 (KLTR…GYRT), 189–196 (FQLHTNVN), 200–209 (EFGGSIYQKV), 213–222 (LDTSVNLAWT), 229–238 (RFGIAAKYQL), and 242–249 (ASISAKVN). A Phosphoserine modification is found at serine 251. NAD(+) contacts are provided by residues 253–255 (LIG) and 271–275 (SALVD). Transmembrane regions (beta stranded) follow at residues 253-262 (LIGVGYTQTL) and 265-274 (GVKLTLSALV). Lysine 277 carries the N6-acetyllysine; alternate modification. Residue lysine 277 forms a Glycyl lysine isopeptide (Lys-Gly) (interchain with G-Cter in ubiquitin); alternate linkage. A beta stranded transmembrane segment spans residues 284-293 (HKLGLALELE).

Belongs to the eukaryotic mitochondrial porin family. As to quaternary structure, monomer, homodimer and higher order oligomers; formation of higher order structures is necessary for scramblase activity. Interacts with ARMC12 in a TBC1D21-dependent manner. Interacts with KLC3. Interacts with SPATA33. Interacts with PPP3CC in a SPATA33-dependent manner. Post-translationally, ubiquitinated by PRKN during mitophagy, leading to its degradation and enhancement of mitophagy. Deubiquitinated by USP30.

The protein localises to the mitochondrion outer membrane. It localises to the membrane. The catalysed reaction is chloride(in) = chloride(out). It catalyses the reaction K(+)(in) = K(+)(out). The enzyme catalyses a 1,2-diacyl-sn-glycero-3-phospho-L-serine(in) = a 1,2-diacyl-sn-glycero-3-phospho-L-serine(out). It carries out the reaction a 1,2-diacyl-sn-glycero-3-phosphocholine(in) = a 1,2-diacyl-sn-glycero-3-phosphocholine(out). The catalysed reaction is a 1,2-diacyl-sn-glycero-3-phospho-(1D-myo-inositol)(in) = a 1,2-diacyl-sn-glycero-3-phospho-(1D-myo-inositol)(out). Its function is as follows. Non-selective voltage-gated ion channel that mediates the transport of anions and cations through the mitochondrion outer membrane and plasma membrane. The channel adopts an open conformation at zero mV and a closed conformation at both positive and negative potentials. There are two populations of channels; the main that functions in a lower open-state conductance with lower ion selectivity, that switch, in a voltage-dependent manner, from the open to a low-conducting 'closed' state and the other that has a normal ion selectivity in the typical high conductance, 'open' state. Binds various lipids, including the sphingolipid ceramide, the phospholipid phosphatidylcholine, and the sterols cholesterol and oxysterol. Binding of ceramide promotes the mitochondrial outer membrane permeabilization (MOMP) apoptotic pathway. Functionally, catalyzes the scrambling of phospholipids across the outer mitochondrial membrane; the mechanism is unrelated to channel activity and is capable of translocating both anionic and zwitterionic phospholipids. In Oryctolagus cuniculus (Rabbit), this protein is Non-selective voltage-gated ion channel VDAC2.